The sequence spans 483 residues: MSNLTPREIVSELDKYIVGQNAAKRMVAVAMRNRWRRQQLDPALRDEIAPKNIIMMGPTGVGKTEIARRLAKLSASPFIKVEATKFTEVGYVGRDVESMVRDLMEIGIALVRAEENEKVRVKAEARAEERLLDLLLPGGAPQPAPAQGMGGLTFDLSASHSGGQAIPQPPAQADASQASPPTGTGSAPDSRSSTREKLRTLWHGGKLDDREVDMEVEESGGPQVGVLSMPGLEDVGSQVRDMFSKVFPSRRKRRRMKVRDAFNLLTQEEADRLIDHDRVSDLARERVEQTGIIFIDEIDKIASGSTQKSSDVSREGVQRDLLPIVEGSVVNTKYGMVRTDHILFIAAGAFHFSKPSDLIPELQGRFPLRAELSALGKDDFLRILTEPHNALTRQYTALLQTEGVHIEFTGDALREIAAFAEETNAQTENIGARRLYTILEKILADLSFEAPDRSGDRVTVDSDYVREHLADVRANKDLSRYIL.

ATP-binding positions include Val-18 and 60–65; that span reads GVGKTE. Low complexity-rich tracts occupy residues 136–147 and 171–181; these read LPGGAPQPAPAQ and AQADASQASPP. A disordered region spans residues 136–212; sequence LPGGAPQPAP…HGGKLDDREV (77 aa). Over residues 182-191 the composition is skewed to polar residues; that stretch reads TGTGSAPDSR. A compositionally biased stretch (basic and acidic residues) spans 192 to 209; sequence SSTREKLRTLWHGGKLDD. Positions 296, 361, and 433 each coordinate ATP.

The protein belongs to the ClpX chaperone family. HslU subfamily. A double ring-shaped homohexamer of HslV is capped on each side by a ring-shaped HslU homohexamer. The assembly of the HslU/HslV complex is dependent on binding of ATP.

The protein resides in the cytoplasm. ATPase subunit of a proteasome-like degradation complex; this subunit has chaperone activity. The binding of ATP and its subsequent hydrolysis by HslU are essential for unfolding of protein substrates subsequently hydrolyzed by HslV. HslU recognizes the N-terminal part of its protein substrates and unfolds these before they are guided to HslV for hydrolysis. The polypeptide is ATP-dependent protease ATPase subunit HslU (Nitratidesulfovibrio vulgaris (strain DSM 19637 / Miyazaki F) (Desulfovibrio vulgaris)).